The chain runs to 96 residues: UPF0235 protein YggU (96 aa).

Belongs to the UPF0235 family.

In Escherichia coli O157:H7, this protein is UPF0235 protein YggU.